Reading from the N-terminus, the 234-residue chain is MEWNESLLRLTVAFVLGSTLGIERQWRQRMAGLRTNTLVAIGAALFVIVSVLTNHDSSPTRIPAQIVSGIGFLAGGVILKEGLTVKGLNTAATLWCSAAVGTLCGQGLFSEAVLGSMMVLVANIALRPLSTFINHQPMHSTELECHYLCHLVCRGDEEANVRRILLDSLAEIKNIKLRSLRSHDLDEFNHFVEVEAAIICTARKDKFLEAVISKLSLNPSVKSVSWQALEQESG.

Transmembrane regions (helical) follow at residues Gly32 to Leu52, Ile62 to Gly82, and Gln106 to Leu126.

The protein belongs to the MgtC/SapB family.

The protein localises to the cell membrane. This is an uncharacterized protein from Synechocystis sp. (strain ATCC 27184 / PCC 6803 / Kazusa).